Reading from the N-terminus, the 328-residue chain is Ketol-acid reductoisomerase (NADP(+)) (328 aa).

Positions 2–181 (AKIYRETDAD…GFTRVGVIET (180 aa)) constitute a KARI N-terminal Rossmann domain. Residues 25–28 (YGIQ), Arg-48, Ser-52, and 82–85 (DMVQ) each bind NADP(+). His-107 is a catalytic residue. Gly-133 lines the NADP(+) pocket. A KARI C-terminal knotted domain is found at 182 to 327 (TFAEETETDL…EDLRRLMRSG (146 aa)). Positions 190, 194, 226, and 230 each coordinate Mg(2+). Ser-251 serves as a coordination point for substrate.

Belongs to the ketol-acid reductoisomerase family. The cofactor is Mg(2+).

It catalyses the reaction (2R)-2,3-dihydroxy-3-methylbutanoate + NADP(+) = (2S)-2-acetolactate + NADPH + H(+). The enzyme catalyses (2R,3R)-2,3-dihydroxy-3-methylpentanoate + NADP(+) = (S)-2-ethyl-2-hydroxy-3-oxobutanoate + NADPH + H(+). It functions in the pathway amino-acid biosynthesis; L-isoleucine biosynthesis; L-isoleucine from 2-oxobutanoate: step 2/4. The protein operates within amino-acid biosynthesis; L-valine biosynthesis; L-valine from pyruvate: step 2/4. Its function is as follows. Involved in the biosynthesis of branched-chain amino acids (BCAA). Catalyzes an alkyl-migration followed by a ketol-acid reduction of (S)-2-acetolactate (S2AL) to yield (R)-2,3-dihydroxy-isovalerate. In the isomerase reaction, S2AL is rearranged via a Mg-dependent methyl migration to produce 3-hydroxy-3-methyl-2-ketobutyrate (HMKB). In the reductase reaction, this 2-ketoacid undergoes a metal-dependent reduction by NADPH to yield (R)-2,3-dihydroxy-isovalerate. This chain is Ketol-acid reductoisomerase (NADP(+)), found in Caldivirga maquilingensis (strain ATCC 700844 / DSM 13496 / JCM 10307 / IC-167).